An 830-amino-acid polypeptide reads, in one-letter code: Scavenger receptor class F member 1 (830 aa).

The first 19 residues, 1-19, serve as a signal peptide directing secretion; the sequence is MGLGLLLPLLLLWTRGTQG. The Extracellular portion of the chain corresponds to 20–421; that stretch reads SELDPKGQHV…CQPGSGSRDT (402 aa). 4 consecutive EGF-like domains span residues 53–87, 95–130, 155–191, and 215–249; these read TIPI…AHCS, WGPD…ARCE, WSST…RRCS, and WGPE…ARCE. Cystine bridges form between Cys57–Cys69, Cys63–Cys75, Cys77–Cys86, Cys99–Cys111, Cys105–Cys118, Cys120–Cys129, Cys159–Cys172, Cys165–Cys179, Cys181–Cys190, Cys219–Cys230, Cys225–Cys237, and Cys239–Cys248. The N-linked (GlcNAc...) asparagine glycan is linked to Asn289. 2 EGF-like domains span residues 302–339 and 351–382; these read FGES…PRCE and CGST…PSCN. Disulfide bonds link Cys306–Cys319, Cys313–Cys326, Cys329–Cys338, Cys355–Cys363, Cys358–Cys370, and Cys372–Cys381. 2 N-linked (GlcNAc...) asparagine glycosylation sites follow: Asn382 and Asn393. The chain crosses the membrane as a helical span at residues 422 to 442; that stretch reads ALIAGSLVPLLLLFLGLACCA. Over 443–830 the chain is Cytoplasmic; the sequence is CCCWAPRSDL…VVPISRPPEP (388 aa). Disordered regions lie at residues 516 to 539, 581 to 688, and 715 to 830; these read GWAT…PAYC, SLAR…SGPV, and FQKG…PPEP. Ser589 and Ser606 each carry phosphoserine. Residues 634 to 643 are compositionally biased toward acidic residues; it reads ESTGPEEAEA. A compositionally biased stretch (low complexity) spans 644 to 653; that stretch reads PESFPAAASP.

As to quaternary structure, heterophilic interaction with SREC2 via its extracellular domain. The heterophilic interaction is suppressed by the presence of ligand such as Ac-LDL. Interacts with AVIL. In terms of tissue distribution, endothelial cells.

It localises to the membrane. In terms of biological role, mediates the binding and degradation of acetylated low density lipoprotein (Ac-LDL). Mediates heterophilic interactions, suggesting a function as adhesion protein. Plays a role in the regulation of neurite-like outgrowth. The polypeptide is Scavenger receptor class F member 1 (SCARF1) (Homo sapiens (Human)).